Consider the following 119-residue polypeptide: Host cell factor C1 regulator 1 (119 aa).

Positions 1 to 34 (MILQQPLERGPQGRAQRDPRAASGASGGLDAREP) are disordered. An interaction with HCFC1 region spans residues 57-60 (DHPY). A Nuclear export signal motif is present at residues 91–100 (IPEALRLLRL).

Interacts with HCFC1.

The protein resides in the cytoplasm. It is found in the nucleus. In terms of biological role, regulates HCFC1 activity by modulating its subcellular localization. Overexpression of HCFC1R1 leads to accumulation of HCFC1 in the cytoplasm. HCFC1R1-mediated export may provide the pool of cytoplasmic HCFC1 required for import of virion-derived VP16 into the nucleus. The polypeptide is Host cell factor C1 regulator 1 (HCFC1R1) (Bos taurus (Bovine)).